Reading from the N-terminus, the 353-residue chain is Mitochondrial import inner membrane translocase subunit TIM50 (353 aa).

The transit peptide at 1 to 21 (MAASAALFSRLRSGLRVGARG) directs the protein to the mitochondrion. Over 22-65 (LCTRLAPPPPRTPEQVTEIANRGGSKAQGPQHQPGSEGPSYAKK) the chain is Mitochondrial matrix. The disordered stretch occupies residues 24–59 (TRLAPPPPRTPEQVTEIANRGGSKAQGPQHQPGSEG). The helical transmembrane segment at 66-86 (IALWIAGLLGAGGTVSIVYIF) threads the bilayer. Over 87-353 (GNNPVDENGT…SRLWPRSKQP (267 aa)) the chain is Mitochondrial intermembrane. The region spanning 143-286 (YYQPPYTLVL…LDLSAFLKTI (144 aa)) is the FCP1 homology domain. Serine 341 bears the Phosphoserine mark.

The protein belongs to the TIM50 family. In terms of assembly, component of the TIM23 complex at least composed of TIMM23, TIMM17 (TIMM17A or TIMM17B) and TIMM50; within this complex, directly interacts with TIMM23. The complex interacts with the TIMM44 component of the PAM complex and with DNAJC15.

It localises to the mitochondrion inner membrane. Functionally, essential component of the TIM23 complex, a complex that mediates the translocation of transit peptide-containing proteins across the mitochondrial inner membrane. Has some phosphatase activity in vitro; however such activity may not be relevant in vivo. In Mus musculus (Mouse), this protein is Mitochondrial import inner membrane translocase subunit TIM50 (Timm50).